The following is a 331-amino-acid chain: Ferrochelatase (331 aa).

2 residues coordinate Fe cation: H187 and E286.

The protein belongs to the ferrochelatase family.

It is found in the cytoplasm. The enzyme catalyses heme b + 2 H(+) = protoporphyrin IX + Fe(2+). Its pathway is porphyrin-containing compound metabolism; protoheme biosynthesis; protoheme from protoporphyrin-IX: step 1/1. Functionally, catalyzes the ferrous insertion into protoporphyrin IX. The sequence is that of Ferrochelatase from Legionella pneumophila subsp. pneumophila (strain Philadelphia 1 / ATCC 33152 / DSM 7513).